The chain runs to 274 residues: MFTDKETHRKPFPTWAHLLHSEPSKQFVFGNWKMNKTLTEAQTFLKSFLSSDILSNPQIITGIIPPFTLLSACQQAVSDSPIFLGAQTTHEADSGAFTGEISAPMLKDIGVDFVLIGHSERRHIFHEQNPVLAEKAAAAIHSGMIPVLCIGETLEEQESGATQDILLNQLTIGLSKLPEQASFILAYEPVWAIGTGKVAHPDLVQETHAFCRKTIASLFSKDIAERTPILYGGSVKADNARSLSLCPDVNGLLVGGASLSSENFLSIIQQIDIP.

31–33 (NWK) lines the substrate pocket. Histidine 118 acts as the Electrophile in catalysis. The Proton acceptor role is filled by glutamate 188. Substrate contacts are provided by residues glycine 194, serine 234, and 255 to 256 (GG).

Belongs to the triosephosphate isomerase family. In terms of assembly, homodimer.

The protein resides in the cytoplasm. The catalysed reaction is D-glyceraldehyde 3-phosphate = dihydroxyacetone phosphate. It participates in carbohydrate biosynthesis; gluconeogenesis. It functions in the pathway carbohydrate degradation; glycolysis; D-glyceraldehyde 3-phosphate from glycerone phosphate: step 1/1. Functionally, involved in the gluconeogenesis. Catalyzes stereospecifically the conversion of dihydroxyacetone phosphate (DHAP) to D-glyceraldehyde-3-phosphate (G3P). In Chlamydia trachomatis serovar L2 (strain ATCC VR-902B / DSM 19102 / 434/Bu), this protein is Triosephosphate isomerase.